Reading from the N-terminus, the 354-residue chain is 4-hydroxy-3-methylbut-2-en-1-yl diphosphate synthase (flavodoxin) (354 aa).

The [4Fe-4S] cluster site is built by C262, C265, C297, and E304.

It belongs to the IspG family. [4Fe-4S] cluster serves as cofactor.

The catalysed reaction is (2E)-4-hydroxy-3-methylbut-2-enyl diphosphate + oxidized [flavodoxin] + H2O + 2 H(+) = 2-C-methyl-D-erythritol 2,4-cyclic diphosphate + reduced [flavodoxin]. It participates in isoprenoid biosynthesis; isopentenyl diphosphate biosynthesis via DXP pathway; isopentenyl diphosphate from 1-deoxy-D-xylulose 5-phosphate: step 5/6. In terms of biological role, converts 2C-methyl-D-erythritol 2,4-cyclodiphosphate (ME-2,4cPP) into 1-hydroxy-2-methyl-2-(E)-butenyl 4-diphosphate. In Helicobacter hepaticus (strain ATCC 51449 / 3B1), this protein is 4-hydroxy-3-methylbut-2-en-1-yl diphosphate synthase (flavodoxin).